A 546-amino-acid chain; its full sequence is Phosphomethylpyrimidine synthase (546 aa).

Substrate is bound by residues N145, M174, Y203, H239, 259-261 (SRG), 300-303 (DGLR), and E339. H343 provides a ligand contact to Zn(2+). Y366 provides a ligand contact to substrate. Zn(2+) is bound at residue H407. Residues C487, C490, and C495 each contribute to the [4Fe-4S] cluster site.

The protein belongs to the ThiC family. [4Fe-4S] cluster is required as a cofactor.

It carries out the reaction 5-amino-1-(5-phospho-beta-D-ribosyl)imidazole + S-adenosyl-L-methionine = 4-amino-2-methyl-5-(phosphooxymethyl)pyrimidine + CO + 5'-deoxyadenosine + formate + L-methionine + 3 H(+). Its pathway is cofactor biosynthesis; thiamine diphosphate biosynthesis. Functionally, catalyzes the synthesis of the hydroxymethylpyrimidine phosphate (HMP-P) moiety of thiamine from aminoimidazole ribotide (AIR) in a radical S-adenosyl-L-methionine (SAM)-dependent reaction. This is Phosphomethylpyrimidine synthase from Mycobacterium ulcerans (strain Agy99).